A 594-amino-acid polypeptide reads, in one-letter code: Acyl-coenzyme A thioesterase 11 (594 aa).

Residues 1–20 (MIQNVGNHLRRGFASMFSNR) constitute a mitochondrion transit peptide. Serine 15 and serine 25 each carry phosphoserine. Residues 20-43 (RTSRKSISHPESGDPPTMAEGEGY) form a disordered region. Positions 45 to 157 (NPTEVQMSQL…LATFVAHREL (113 aa)) constitute a HotDog ACOT-type 1 domain. Residues 93 to 95 (TAS), 122 to 124 (NSS), arginine 183, and 272 to 274 (HFR) contribute to the CoA site. One can recognise a HotDog ACOT-type 2 domain in the interval 217-330 (EKTRVESVEL…FMTFVVLDKD (114 aa)). An START domain is found at 370-582 (KQAEVALSVP…FKACESFLLD (213 aa)).

The protein resides in the mitochondrion matrix. Its subcellular location is the cytoplasm. The catalysed reaction is hexadecanoyl-CoA + H2O = hexadecanoate + CoA + H(+). It carries out the reaction tetradecanoyl-CoA + H2O = tetradecanoate + CoA + H(+). The enzyme catalyses dodecanoyl-CoA + H2O = dodecanoate + CoA + H(+). It catalyses the reaction butanoyl-CoA + H2O = butanoate + CoA + H(+). It functions in the pathway lipid metabolism; fatty acid metabolism. In terms of biological role, has an acyl-CoA thioesterase activity with a preference for the long chain fatty acyl-CoA thioesters hexadecanoyl-CoA/palmitoyl-CoA and tetradecanoyl-CoA/myristoyl-CoA which are the main substrates in the mitochondrial beta-oxidation pathway. The polypeptide is Acyl-coenzyme A thioesterase 11 (Acot11) (Mus musculus (Mouse)).